We begin with the raw amino-acid sequence, 439 residues long: Oxysterol-binding protein 6 (439 aa).

Disordered regions lie at residues 1 to 40 (MSAK…SGAD) and 409 to 439 (ESST…QTTN). Composition is skewed to polar residues over residues 409 to 419 (ESSTPNLSKVD) and 429 to 439 (PVDNSIPQTTN).

The protein belongs to the OSBP family.

The chain is Oxysterol-binding protein 6 (osbF) from Dictyostelium discoideum (Social amoeba).